An 85-amino-acid chain; its full sequence is Large ribosomal subunit protein bL27 (85 aa).

Over residues 1–11 (MASKASGGSTR) the composition is skewed to polar residues. The disordered stretch occupies residues 1-20 (MASKASGGSTRNGRDSISKR).

This sequence belongs to the bacterial ribosomal protein bL27 family.

In Sulfurihydrogenibium sp. (strain YO3AOP1), this protein is Large ribosomal subunit protein bL27.